The primary structure comprises 632 residues: Palmitoyltransferase ZDHHC17 (632 aa).

The Cytoplasmic segment spans residues 1–304; it reads MQREEGFNTK…LKADKEFRQK (304 aa). Positions 11–305 are necessary and sufficient for interaction with DNAJC5 and SNAP25; that stretch reads MADGPDEYDT…KADKEFRQKV (295 aa). 7 ANK repeats span residues 51 to 86, 89 to 118, 123 to 152, 156 to 185, 189 to 219, 224 to 253, and 257 to 286; these read THID…VRQP, ENVT…IVDQ, LNST…DPSL, EGCS…DVDM, NGMT…SVNL, HKNT…NVDA, and KGES…AKGY. 2 consecutive transmembrane segments (helical) span residues 305–325 and 326–346; these read VMLG…DLNI and DSWL…QFLS. The Cytoplasmic portion of the chain corresponds to 347 to 357; that stretch reads KSFFDHSMHSA. A helical membrane pass occupies residues 358-378; that stretch reads LPLGIYLATKFWMYVTWFFWF. At 379 to 381 the chain is on the lumenal side; that stretch reads WND. A helical transmembrane segment spans residues 382–402; sequence LNFLFIHLPFLANSVALFYNF. Residues 403–480 lie on the Cytoplasmic side of the membrane; sequence GKSWKSDPGI…GNCVGAGNHR (78 aa). In terms of domain architecture, DHHC spans 437 to 487; that stretch reads IFCSTCLIRKPVRSKHCGVCNRCIAKFDHHCPWVGNCVGAGNHRYFMGYLF. Cys-467 functions as the S-palmitoyl cysteine intermediate in the catalytic mechanism. Residues 481-501 traverse the membrane as a helical segment; that stretch reads YFMGYLFFLLFMICWMIYGCI. The Lumenal segment spans residues 502 to 529; that stretch reads SYWGLHCETTYTKDGFWTYITQIATCSP. A helical transmembrane segment spans residues 530–550; the sequence is WMFWMFLNSVFHFMWVAVLLM. Residues 551-632 are Cytoplasmic-facing; the sequence is CQMYQISCLG…QISGSGYQLV (82 aa).

The protein belongs to the DHHC palmitoyltransferase family. AKR/ZDHHC17 subfamily. In terms of assembly, interacts (via ANK repeats) with numerous proteins (via the consensus sequence motif [VIAP]-[VIT]-x-x-Q-P). Interacts (via ANK repeats) with CLIP3. Interacts (via ANK repeats) with HTT; this interaction is inversely correlated to the length of the polyglutamine tract added to the huntingtin protein in Huntington disease. Interacts (via ANK repeats) with DNAJC5 (via C-terminus). Interacts (via ANK repeats) with MAP6. Interacts (via ANK repeats) with SNAP23. Interacts (via ANK repeats) with SNAP25. Interacts (via ANK repeats) with EVL. Interacts with SPRED1 and SPRED3. Interacts with GPM6A and OPTN. May interact (via ANK repeats) with SPRED2. May interact with NTRK1; may regulate its localization and function. Post-translationally, autopalmitoylated. Autopalmitoylation has a regulatory role in ZDHHC17-mediated Mg(2+) transport. Expressed in all brain regions. Expression is highest in the cortex, cerebellum, occipital lobe and caudate and lowest in the spinal cord. Expression is also seen in testis, pancreas, heart and kidney.

It localises to the golgi apparatus membrane. Its subcellular location is the cytoplasmic vesicle membrane. It is found in the presynaptic cell membrane. The enzyme catalyses L-cysteinyl-[protein] + hexadecanoyl-CoA = S-hexadecanoyl-L-cysteinyl-[protein] + CoA. The catalysed reaction is L-cysteinyl-[protein] + tetradecanoyl-CoA = S-tetradecanoyl-L-cysteinyl-[protein] + CoA. It catalyses the reaction L-cysteinyl-[protein] + octadecanoyl-CoA = S-octadecanoyl-L-cysteinyl-[protein] + CoA. In terms of biological role, palmitoyltransferase that catalyzes the addition of palmitate onto various protein substrates and is involved in a variety of cellular processes. Has no stringent fatty acid selectivity and in addition to palmitate can also transfer onto target proteins myristate from tetradecanoyl-CoA and stearate from octadecanoyl-CoA. Palmitoyltransferase specific for a subset of neuronal proteins, including SNAP25, DLG4/PSD95, GAD2, SYT1 and HTT. Also palmitoylates neuronal protein GPM6A as well as SPRED1 and SPRED3. Could also play a role in axonogenesis through the regulation of NTRK1 and the downstream ERK1/ERK2 signaling cascade. May be involved in the sorting or targeting of critical proteins involved in the initiating events of endocytosis at the plasma membrane. May play a role in Mg(2+) transport. Could also palmitoylate DNAJC5 and regulate its localization to the Golgi membrane. Palmitoylates CASP6, thereby preventing its dimerization and subsequent activation. This is Palmitoyltransferase ZDHHC17 from Homo sapiens (Human).